Here is a 942-residue protein sequence, read N- to C-terminus: Chitin synthase 4 (942 aa).

Residues 1–124 (MPPRYPFGGG…FDEHDGDVPL (124 aa)) are disordered. The segment covering 14–26 (DEAHHQPLERRTT) has biased composition (basic and acidic residues). Residues 27-36 (AEAQGNSFTH) show a composition bias toward polar residues. N604 carries N-linked (GlcNAc...) asparagine glycosylation. 7 consecutive transmembrane segments (helical) span residues 641–661 (TIQL…FFIL), 674–694 (VPNL…FLLS), 709–729 (AMVV…YLAV), 755–775 (IVIS…MFLE), 783–803 (IVQY…YAFA), 885–905 (VLCW…ISSI), and 909–929 (TIYM…RMMG).

This sequence belongs to the chitin synthase family. Class I subfamily.

The protein resides in the cell membrane. It is found in the cytoplasmic vesicle membrane. The enzyme catalyses [(1-&gt;4)-N-acetyl-beta-D-glucosaminyl](n) + UDP-N-acetyl-alpha-D-glucosamine = [(1-&gt;4)-N-acetyl-beta-D-glucosaminyl](n+1) + UDP + H(+). Its function is as follows. Polymerizes chitin, a structural polymer of the cell wall and septum, by transferring the sugar moiety of UDP-GlcNAc to the non-reducing end of the growing chitin polymer. This Mycosarcoma maydis (Corn smut fungus) protein is Chitin synthase 4.